The primary structure comprises 224 residues: MRNNIRIAIDGPAAAGKSTVAKIIAKRLSYLYIDTGAMYRALTYVALQQKVALDDEQALISLLKNTYIELKSSEQGQLVFVNGEDVTNIIRSEEVTNAVSLVAKHPSVREEMVARQRALAKNGGVVMDGRDIGTYVLPNAEVKIFLKASVEERAKRRHAENIARGFPSDLETLKKEIARRDQIDSEREVAPLKKAEDAIEIDTTSLSIEEVVDRIMEIVNERIG.

11–19 (GPAAAGKST) is a binding site for ATP.

The protein belongs to the cytidylate kinase family. Type 1 subfamily.

The protein localises to the cytoplasm. The enzyme catalyses CMP + ATP = CDP + ADP. It catalyses the reaction dCMP + ATP = dCDP + ADP. In Geobacillus sp. (strain WCH70), this protein is Cytidylate kinase.